The following is a 562-amino-acid chain: Arginine--tRNA ligase (562 aa).

The 'HIGH' region motif lies at 121 to 131 (PNIAKPFSVGH).

It belongs to the class-I aminoacyl-tRNA synthetase family. As to quaternary structure, monomer.

It localises to the cytoplasm. It carries out the reaction tRNA(Arg) + L-arginine + ATP = L-arginyl-tRNA(Arg) + AMP + diphosphate. The chain is Arginine--tRNA ligase from Streptococcus suis (strain 98HAH33).